We begin with the raw amino-acid sequence, 156 residues long: Putative pre-16S rRNA nuclease (156 aa).

This sequence belongs to the YqgF nuclease family.

Its subcellular location is the cytoplasm. In terms of biological role, could be a nuclease involved in processing of the 5'-end of pre-16S rRNA. The sequence is that of Putative pre-16S rRNA nuclease from Ehrlichia chaffeensis (strain ATCC CRL-10679 / Arkansas).